An 886-amino-acid polypeptide reads, in one-letter code: MRGFNLLLFWGCCVMHSWEGHIRPTRKPNTKGNNCRDSTLCPAYATCTNTVDSYYCACKQGFLSSNGQNHFKDPGVRCKDIDECSQSPQPCGPNSSCKNLSGRYKCSCLDGFSSPTGNDWVPGKPGNFSCTDINECLTSSVCPEHSDCVNSMGSYSCSCQVGFISRNSTCEDVDECADPRACPEHATCNNTVGNYSCFCNPGFESSSGHLSFQGLKASCEDIDECTEMCPINSTCTNTPGSYFCTCHPGFAPSNGQLNFTDQGVECRDIDECRQDPSTCGPNSICTNALGSYSCGCIAGFHPNPEGSQKDGNFSCQRVLFKCKEDVIPDNKQIQQCQEGTAVKPAYVSFCAQINNIFSVLDKVCENKTTVVSLKNTTESFVPVLKQISTWTKFTKEETSSLATVFLESVESMTLASFWKPSANITPAVRTEYLDIESKVINKECSEENVTLDLVAKGDKMKIGCSTIEESESTETTGVAFVSFVGMESVLNERFFKDHQAPLTTSEIKLKMNSRVVGGIMTGEKKDGFSDPIIYTLENIQPKQKFERPICVSWSTDVKGGRWTSFGCVILEASETYTICSCNQMANLAVIMASGELTMDFSLYIISHVGIIISLVCLVLAIATFLLCRSIRNHNTYLHLHLCVCLLLAKTLFLAGIHKTDNKMGCAIIAGFLHYLFLACFFWMLVEAVILFLMVRNLKVVNYFSSRNIKMLHICAFGYGLPMLVVVISASVQPQGYGMHNRCWLNTETGFIWSFLGPVCTVIVINSLLLTWTLWILRQRLSSVNAEVSTLKDTRLLTFKAFAQLFILGCSWVLGIFQIGPVAGVMAYLFTIINSLQGAFIFLIHCLLNGQVREEYKRWITGKTKPSSQSQTSRILLSSMPSASKTG.

A signal peptide spans 1-20 (MRGFNLLLFWGCCVMHSWEG). The Extracellular segment spans residues 21–599 (HIRPTRKPNT…IMASGELTMD (579 aa)). Residues 31–79 (KGNNCRDSTLCPAYATCTNTVDSYYCACKQGFLSSNGQNHFKDPGVRCK) form the EGF-like 1 domain. Intrachain disulfides connect Cys35/Cys47, Cys41/Cys56, Cys58/Cys78, Cys84/Cys97, Cys91/Cys106, Cys108/Cys130, Cys136/Cys148, Cys142/Cys157, Cys159/Cys170, Cys176/Cys188, Cys182/Cys197, Cys199/Cys219, Cys225/Cys235, Cys229/Cys244, Cys246/Cys266, Cys272/Cys285, Cys279/Cys294, and Cys296/Cys315. In terms of domain architecture, EGF-like 2; calcium-binding spans 80 to 131 (DIDECSQSPQPCGPNSSCKNLSGRYKCSCLDGFSSPTGNDWVPGKPGNFSCT). N-linked (GlcNAc...) asparagine glycosylation is found at Asn94, Asn99, and Asn127. The 40-residue stretch at 132–171 (DINECLTSSVCPEHSDCVNSMGSYSCSCQVGFISRNSTCE) folds into the EGF-like 3; calcium-binding domain. N-linked (GlcNAc...) asparagine glycosylation is present at Asn167. An EGF-like 4; calcium-binding domain is found at 172–220 (DVDECADPRACPEHATCNNTVGNYSCFCNPGFESSSGHLSFQGLKASCE). 2 N-linked (GlcNAc...) asparagine glycosylation sites follow: Asn189 and Asn194. The EGF-like 5; calcium-binding domain occupies 221-267 (DIDECTEMCPINSTCTNTPGSYFCTCHPGFAPSNGQLNFTDQGVECR). Asn232 and Asn258 each carry an N-linked (GlcNAc...) asparagine glycan. Positions 268–316 (DIDECRQDPSTCGPNSICTNALGSYSCGCIAGFHPNPEGSQKDGNFSCQ) constitute an EGF-like 6; calcium-binding domain. N-linked (GlcNAc...) asparagine glycans are attached at residues Asn312, Asn366, Asn375, and Asn448. Positions 431–597 (EYLDIESKVI…AVIMASGELT (167 aa)) constitute a GAIN-B domain. 2 disulfide bridges follow: Cys550–Cys579 and Cys567–Cys581. The segment at 550-597 (CVSWSTDVKGGRWTSFGCVILEASETYTICSCNQMANLAVIMASGELT) is GPS. The helical transmembrane segment at 600–627 (FSLYIISHVGIIISLVCLVLAIATFLLC) threads the bilayer. The Cytoplasmic portion of the chain corresponds to 628–634 (RSIRNHN). A helical membrane pass occupies residues 635–656 (TYLHLHLCVCLLLAKTLFLAGI). Over 657–666 (HKTDNKMGCA) the chain is Extracellular. The helical transmembrane segment at 667 to 690 (IIAGFLHYLFLACFFWMLVEAVIL) threads the bilayer. Residues 691-709 (FLMVRNLKVVNYFSSRNIK) lie on the Cytoplasmic side of the membrane. A helical transmembrane segment spans residues 710 to 731 (MLHICAFGYGLPMLVVVISASV). Over 732–747 (QPQGYGMHNRCWLNTE) the chain is Extracellular. The helical transmembrane segment at 748–776 (TGFIWSFLGPVCTVIVINSLLLTWTLWIL) threads the bilayer. Residues 777-794 (RQRLSSVNAEVSTLKDTR) lie on the Cytoplasmic side of the membrane. Residues 795 to 814 (LLTFKAFAQLFILGCSWVLG) form a helical membrane-spanning segment. The Extracellular portion of the chain corresponds to 815–829 (IFQIGPVAGVMAYLF). A helical transmembrane segment spans residues 830-852 (TIINSLQGAFIFLIHCLLNGQVR). At 853 to 886 (EEYKRWITGKTKPSSQSQTSRILLSSMPSASKTG) the chain is on the cytoplasmic side. The interval 862 to 886 (KTKPSSQSQTSRILLSSMPSASKTG) is disordered. The span at 863 to 886 (TKPSSQSQTSRILLSSMPSASKTG) shows a compositional bias: polar residues.

The protein belongs to the G-protein coupled receptor 2 family. Adhesion G-protein coupled receptor (ADGR) subfamily. As to expression, expression is restricted to eosinophils.

It is found in the cell membrane. Functionally, orphan receptor involved in cell adhesion and probably in cell-cell interactions specifically involving cells of the immune system. May play a role in regulatory T-cells (Treg) development. This is Adhesion G protein-coupled receptor E1 from Homo sapiens (Human).